Consider the following 389-residue polypeptide: 23S rRNA (uracil(747)-C(5))-methyltransferase RlmC (389 aa).

Cys-12, Cys-20, Cys-23, and Cys-99 together coordinate [4Fe-4S] cluster. Gln-224, Phe-253, Glu-274, and Asn-321 together coordinate S-adenosyl-L-methionine. Cys-348 serves as the catalytic Nucleophile.

It belongs to the class I-like SAM-binding methyltransferase superfamily. RNA M5U methyltransferase family. RlmC subfamily.

It carries out the reaction uridine(747) in 23S rRNA + S-adenosyl-L-methionine = 5-methyluridine(747) in 23S rRNA + S-adenosyl-L-homocysteine + H(+). Functionally, catalyzes the formation of 5-methyl-uridine at position 747 (m5U747) in 23S rRNA. This is 23S rRNA (uracil(747)-C(5))-methyltransferase RlmC from Shewanella putrefaciens (strain CN-32 / ATCC BAA-453).